The chain runs to 444 residues: Phosphoglucosamine mutase (444 aa).

Serine 102 (phosphoserine intermediate) is an active-site residue. Mg(2+)-binding residues include serine 102, aspartate 241, aspartate 243, and aspartate 245. Serine 102 is modified (phosphoserine).

Belongs to the phosphohexose mutase family. Mg(2+) serves as cofactor. In terms of processing, activated by phosphorylation.

The enzyme catalyses alpha-D-glucosamine 1-phosphate = D-glucosamine 6-phosphate. Its function is as follows. Catalyzes the conversion of glucosamine-6-phosphate to glucosamine-1-phosphate. This is Phosphoglucosamine mutase from Pasteurella multocida (strain Pm70).